We begin with the raw amino-acid sequence, 41 residues long: Peptide Hact-SCRiP1 (41 aa).

Disulfide bonds link Cys5-Cys37, Cys12-Cys31, Cys19-Cys38, and Cys26-Cys39.

Expressed in tentacles.

Its subcellular location is the nematocyst. The protein resides in the secreted. In terms of biological role, peptide with unknown function. Does not exhibit any effect on human ion channel TRPV1 in a Xenopus laevis oocytes assay. In Heliofungia actiniformis (Mushroom coral), this protein is Peptide Hact-SCRiP1.